Here is an 835-residue protein sequence, read N- to C-terminus: Serine/threonine-protein kinase TNNI3K (835 aa).

A lipid anchor (N-myristoyl glycine) is attached at glycine 2. Positions 21 to 50 (SESYAIIIERLEDNLQIKENEFQELRHIFG) form a coiled coil. 10 ANK repeats span residues 66 to 96 (RGLS…RPSR), 100 to 129 (NGFP…DVQQ), 133 to 162 (GGLT…NVNV), 166 to 195 (VFFT…DVNV), 199 to 228 (VGDR…KADV), 234 to 263 (EDHV…EVQP), 269 to 298 (YGDT…TESL), 304 to 335 (FSET…NINH), 339 to 368 (DGHT…DMNL), and 381 to 410 (DEQT…PQEE). The Protein kinase domain occupies 463–723 (IEFHEIIGSG…EVVSKLEECL (261 aa)). ATP contacts are provided by residues 469-477 (IGSGSFGKV) and lysine 490. The active-site Proton acceptor is aspartate 588.

Belongs to the protein kinase superfamily. TKL Ser/Thr protein kinase family. MAP kinase kinase kinase subfamily. In terms of assembly, interacts with TNNI3, ACTC, ACTA1, MYBPC3, AIP, FABP3 and HADHB. Requires Mg(2+) as cofactor. Post-translationally, autophosphorylated.

The protein resides in the nucleus. Its subcellular location is the cytoplasm. The enzyme catalyses L-seryl-[protein] + ATP = O-phospho-L-seryl-[protein] + ADP + H(+). It carries out the reaction L-threonyl-[protein] + ATP = O-phospho-L-threonyl-[protein] + ADP + H(+). May play a role in cardiac physiology. The sequence is that of Serine/threonine-protein kinase TNNI3K from Rattus norvegicus (Rat).